Here is a 463-residue protein sequence, read N- to C-terminus: UDP-N-acetylmuramate--L-alanine ligase (463 aa).

Residue 112–118 coordinates ATP; the sequence is GTHGKTT.

The protein belongs to the MurCDEF family.

The protein localises to the cytoplasm. The enzyme catalyses UDP-N-acetyl-alpha-D-muramate + L-alanine + ATP = UDP-N-acetyl-alpha-D-muramoyl-L-alanine + ADP + phosphate + H(+). The protein operates within cell wall biogenesis; peptidoglycan biosynthesis. Its function is as follows. Cell wall formation. This is UDP-N-acetylmuramate--L-alanine ligase from Dechloromonas aromatica (strain RCB).